The following is a 174-amino-acid chain: Ribosome maturation factor RimM (174 aa).

Residues 97–173 (GNKFYFHEVI…DLPVGLVEMY (77 aa)) enclose the PRC barrel domain.

The protein belongs to the RimM family. As to quaternary structure, binds ribosomal protein uS19.

It is found in the cytoplasm. Its function is as follows. An accessory protein needed during the final step in the assembly of 30S ribosomal subunit, possibly for assembly of the head region. Essential for efficient processing of 16S rRNA. May be needed both before and after RbfA during the maturation of 16S rRNA. It has affinity for free ribosomal 30S subunits but not for 70S ribosomes. The protein is Ribosome maturation factor RimM of Flavobacterium johnsoniae (strain ATCC 17061 / DSM 2064 / JCM 8514 / BCRC 14874 / CCUG 350202 / NBRC 14942 / NCIMB 11054 / UW101) (Cytophaga johnsonae).